Here is a 309-residue protein sequence, read N- to C-terminus: Olfactory receptor 5H17 (309 aa).

Residues 1–28 lie on the Extracellular side of the membrane; it reads MEKKNETLWTEFVLTGLTCLPQWKPLLF. The N-linked (GlcNAc...) asparagine glycan is linked to N5. Residues 29–49 form a helical membrane-spanning segment; the sequence is LVFLVIYFMTIVGNLGLITLI. Topologically, residues 50–56 are cytoplasmic; sequence WNDPHLH. The helical transmembrane segment at 57–77 threads the bilayer; that stretch reads IPMYLFLSNLAFVDTWLSSTV. Topologically, residues 78–93 are extracellular; that stretch reads TPRMLFNLLDKGKVIS. A helical transmembrane segment spans residues 94 to 114; sequence VAECKTQFFSFAISVTTECFL. The cysteines at positions 97 and 189 are disulfide-linked. At 115–144 the chain is on the cytoplasmic side; that stretch reads LAAMAYDRYAAICNPLLYPVIMTNRLCVRL. A helical membrane pass occupies residues 145–165; the sequence is LALSFIGGFLHAVIHESFLSR. Over 166–198 the chain is Extracellular; it reads LTFCNSNIIYHFYCDVIPLLKISCTDPSLNYLI. The chain crosses the membrane as a helical span at residues 199-219; the sequence is IFIFSGSIQVFTIMTVLISYT. The Cytoplasmic portion of the chain corresponds to 220-239; it reads FVLFTILKKKSDKGIRKAFS. A helical membrane pass occupies residues 240–260; it reads TCGAHLLSVSLYYGPLLFMYV. Topologically, residues 261–271 are extracellular; that stretch reads HPASSEVDDQD. Residues 272–292 traverse the membrane as a helical segment; sequence MILSLFYTVIIPVLNPIIYSL. Topologically, residues 293-309 are cytoplasmic; that stretch reads RNKQVIDSLKKMLKMMV.

It belongs to the G-protein coupled receptor 1 family.

Its subcellular location is the cell membrane. Its function is as follows. Potential odorant receptor. The polypeptide is Olfactory receptor 5H17 (Mus musculus (Mouse)).